Consider the following 222-residue polypeptide: Putative germin-like protein subfamily 1 member 9 (222 aa).

The signal sequence occupies residues 1 to 22; sequence MKSFSFLAVLSILAITLSLSKA. The cysteines at positions 32 and 49 are disulfide-linked. In terms of domain architecture, Cupin type-1 spans 63–213; it reads TGLHEARPPN…AFQVDPKIVM (151 aa). Asn78 carries an N-linked (GlcNAc...) asparagine glycan. Mn(2+) is bound by residues His111, His113, Glu118, and His159.

This sequence belongs to the germin family. Oligomer (believed to be a pentamer but probably hexamer).

It is found in the secreted. The protein resides in the extracellular space. It localises to the apoplast. May play a role in plant defense. Probably has no oxalate oxidase activity even if the active site is conserved. This is Putative germin-like protein subfamily 1 member 9 from Arabidopsis thaliana (Mouse-ear cress).